The chain runs to 137 residues: Actin-depolymerizing factor 7 (137 aa).

Ser6 carries the phosphoserine modification. The ADF-H domain maps to 7–137 (GMAVEDECKL…SFDIIKSRAL (131 aa)).

Belongs to the actin-binding proteins ADF family. As to expression, specifically expressed in pollen.

Its subcellular location is the cytoplasm. The protein localises to the cytoskeleton. Its function is as follows. Actin-depolymerizing protein. Severs actin filaments (F-actin) and binds to actin monomers. Binds monomeric actin (G-actin) with a marked preference for the ADP-loaded form and inhibits the rate of nucleotide exchange on G-actin. Required for pollen tube growth. Promotes turnover of longitudinal actin cables by severing actin filaments in pollen tubes. The sequence is that of Actin-depolymerizing factor 7 (ADF7) from Arabidopsis thaliana (Mouse-ear cress).